The primary structure comprises 399 residues: Fructose-bisphosphate aldolase 1, chloroplastic (399 aa).

A chloroplast-targeting transit peptide spans 1–48 (MASSTATMLKASPVKSDWVKGQSLLLRQPSSVSAIRSHVAPSALTVRA). Residue R96 coordinates substrate. S158 carries the phosphoserine modification. Position 186 (K186) interacts with substrate. S216 is modified (phosphoserine). E226 serves as the catalytic Proton acceptor. The Schiff-base intermediate with dihydroxyacetone-P role is filled by K268. Substrate is bound at residue 310–312 (SGG). Position 395 is an N6,N6,N6-trimethyllysine (K395).

It belongs to the class I fructose-bisphosphate aldolase family. In terms of assembly, homotetramer. Post-translationally, can be trimethylated at Lys-395 by LSMT-L, but the trimethylation has no effect in vitro on the kinetic properties of the enzyme. In terms of processing, S-glutathionylated. As to expression, highly expressed in rosettes leaves and cauline leaves.

The protein localises to the plastid. Its subcellular location is the chloroplast. It localises to the plastoglobule. It is found in the chloroplast stroma. It catalyses the reaction beta-D-fructose 1,6-bisphosphate = D-glyceraldehyde 3-phosphate + dihydroxyacetone phosphate. It functions in the pathway carbohydrate degradation; glycolysis; D-glyceraldehyde 3-phosphate and glycerone phosphate from D-glucose: step 4/4. Functionally, plays a key role in glycolysis and gluconeogenesis. In Arabidopsis thaliana (Mouse-ear cress), this protein is Fructose-bisphosphate aldolase 1, chloroplastic.